The sequence spans 240 residues: Biosynthetic peptidoglycan transglycosylase (240 aa).

Residues 9–31 (FLNVVKWFAIASVLLVLLFRVVP) form a helical membrane-spanning segment.

The protein belongs to the glycosyltransferase 51 family.

It localises to the cell inner membrane. It catalyses the reaction [GlcNAc-(1-&gt;4)-Mur2Ac(oyl-L-Ala-gamma-D-Glu-L-Lys-D-Ala-D-Ala)](n)-di-trans,octa-cis-undecaprenyl diphosphate + beta-D-GlcNAc-(1-&gt;4)-Mur2Ac(oyl-L-Ala-gamma-D-Glu-L-Lys-D-Ala-D-Ala)-di-trans,octa-cis-undecaprenyl diphosphate = [GlcNAc-(1-&gt;4)-Mur2Ac(oyl-L-Ala-gamma-D-Glu-L-Lys-D-Ala-D-Ala)](n+1)-di-trans,octa-cis-undecaprenyl diphosphate + di-trans,octa-cis-undecaprenyl diphosphate + H(+). The protein operates within cell wall biogenesis; peptidoglycan biosynthesis. Functionally, peptidoglycan polymerase that catalyzes glycan chain elongation from lipid-linked precursors. The sequence is that of Biosynthetic peptidoglycan transglycosylase from Pseudomonas fluorescens (strain SBW25).